Reading from the N-terminus, the 279-residue chain is Diaminopimelate epimerase (279 aa).

Substrate contacts are provided by Asn-12, Gln-45, and Asn-65. The Proton donor role is filled by Cys-74. Substrate contacts are provided by residues 75 to 76 (GN), Asn-162, Asn-195, and 213 to 214 (ER). The active-site Proton acceptor is the Cys-222. 223–224 (GT) is a substrate binding site.

It belongs to the diaminopimelate epimerase family. In terms of assembly, homodimer.

It is found in the cytoplasm. The catalysed reaction is (2S,6S)-2,6-diaminopimelate = meso-2,6-diaminopimelate. It participates in amino-acid biosynthesis; L-lysine biosynthesis via DAP pathway; DL-2,6-diaminopimelate from LL-2,6-diaminopimelate: step 1/1. Functionally, catalyzes the stereoinversion of LL-2,6-diaminopimelate (L,L-DAP) to meso-diaminopimelate (meso-DAP), a precursor of L-lysine and an essential component of the bacterial peptidoglycan. The polypeptide is Diaminopimelate epimerase (Shewanella woodyi (strain ATCC 51908 / MS32)).